The following is a 279-amino-acid chain: Protease HtpX homolog (279 aa).

2 consecutive transmembrane segments (helical) span residues 4-24 (IFLFLATNIAVLVVINIVLAV) and 34-54 (GSLLAYSAVVGFTGSIISLLM). His-140 contacts Zn(2+). Glu-141 is a catalytic residue. His-144 lines the Zn(2+) pocket. The next 2 helical transmembrane spans lie at 155 to 175 (LIQGVVNTFVVFLSRIIANLI) and 189 to 209 (FLVSMVFQILFGFLASLIVMW). Glu-215 lines the Zn(2+) pocket.

The protein belongs to the peptidase M48B family. It depends on Zn(2+) as a cofactor.

It localises to the cell inner membrane. This Neisseria gonorrhoeae (strain ATCC 700825 / FA 1090) protein is Protease HtpX homolog.